We begin with the raw amino-acid sequence, 192 residues long: Putative 3-methyladenine DNA glycosylase (192 aa).

It belongs to the DNA glycosylase MPG family.

The sequence is that of Putative 3-methyladenine DNA glycosylase from Bdellovibrio bacteriovorus (strain ATCC 15356 / DSM 50701 / NCIMB 9529 / HD100).